The sequence spans 449 residues: tRNA-2-methylthio-N(6)-dimethylallyladenosine synthase (449 aa).

The MTTase N-terminal domain maps to 3 to 118 (KKVFVKTFGC…LPELLAQREA (116 aa)). [4Fe-4S] cluster is bound by residues C12, C49, C81, C155, C159, and C162. A Radical SAM core domain is found at 141–376 (RVEGASAFVS…VINANIKSIS (236 aa)). In terms of domain architecture, TRAM spans 377 to 440 (ESRVGTVQRI…AYTLRGEVVT (64 aa)).

The protein belongs to the methylthiotransferase family. MiaB subfamily. Monomer. It depends on [4Fe-4S] cluster as a cofactor.

The protein localises to the cytoplasm. It catalyses the reaction N(6)-dimethylallyladenosine(37) in tRNA + (sulfur carrier)-SH + AH2 + 2 S-adenosyl-L-methionine = 2-methylsulfanyl-N(6)-dimethylallyladenosine(37) in tRNA + (sulfur carrier)-H + 5'-deoxyadenosine + L-methionine + A + S-adenosyl-L-homocysteine + 2 H(+). Catalyzes the methylthiolation of N6-(dimethylallyl)adenosine (i(6)A), leading to the formation of 2-methylthio-N6-(dimethylallyl)adenosine (ms(2)i(6)A) at position 37 in tRNAs that read codons beginning with uridine. The polypeptide is tRNA-2-methylthio-N(6)-dimethylallyladenosine synthase (Paracidovorax citrulli (strain AAC00-1) (Acidovorax citrulli)).